Here is a 112-residue protein sequence, read N- to C-terminus: 2Fe-2S ferredoxin (112 aa).

Residues 5 to 107 enclose the 2Fe-2S ferredoxin-type domain; it reads IKVTFIINDG…GIKVRIPATT (103 aa). Cys-42, Cys-48, Cys-51, and Cys-88 together coordinate [2Fe-2S] cluster.

It belongs to the adrenodoxin/putidaredoxin family. [2Fe-2S] cluster is required as a cofactor.

In terms of biological role, ferredoxin are iron-sulfur proteins that transfer electrons in a wide variety of metabolic reactions. The chain is 2Fe-2S ferredoxin (fdxB) from Rickettsia conorii (strain ATCC VR-613 / Malish 7).